A 109-amino-acid polypeptide reads, in one-letter code: MSITDILSAEDIAAALQECQDPDTFEPQKFFQTSGLSKMSASQVKDIFRFIDNDQSGYLDGDELKYFLQKFQSDARELTESETKSLMDAADNDGDGKIGADEFQEMVHS.

At Ser-2 the chain carries N-acetylserine. 2 EF-hand domains span residues 39–74 and 78–109; these read MSAS…FQSD and LTES…MVHS. Ca(2+)-binding residues include Asp-52, Asp-54, Ser-56, Tyr-58, Glu-63, Asp-91, Asp-93, Asp-95, Lys-97, and Glu-102.

Belongs to the parvalbumin family. In terms of tissue distribution, found in tumor tissues and not detected in normal tissues.

In terms of biological role, has some calmodulin-like activity with respect to enzyme activation and growth regulation. Binds two calcium ions. This is Oncomodulin (Ocm) from Rattus norvegicus (Rat).